Reading from the N-terminus, the 446-residue chain is Phosphoglucosamine mutase (446 aa).

The active-site Phosphoserine intermediate is the Ser100. Ser100, Asp241, Asp243, and Asp245 together coordinate Mg(2+). Ser100 is subject to Phosphoserine.

It belongs to the phosphohexose mutase family. Requires Mg(2+) as cofactor. In terms of processing, activated by phosphorylation.

The catalysed reaction is alpha-D-glucosamine 1-phosphate = D-glucosamine 6-phosphate. Catalyzes the conversion of glucosamine-6-phosphate to glucosamine-1-phosphate. This is Phosphoglucosamine mutase from Methylobacterium nodulans (strain LMG 21967 / CNCM I-2342 / ORS 2060).